A 347-amino-acid chain; its full sequence is Isopentenyl-diphosphate delta-isomerase (347 aa).

A substrate-binding site is contributed by 11–12 (RK). FMN-binding positions include 72-74 (AMT), serine 102, and asparagine 131. Glutamine 161 contributes to the substrate binding site. Residue glutamate 162 participates in Mg(2+) binding. Residues lysine 192, threonine 222, and 287 to 288 (AG) each bind FMN.

The protein belongs to the IPP isomerase type 2 family. Homooctamer. Dimer of tetramers. The cofactor is FMN. NADPH is required as a cofactor. Mg(2+) serves as cofactor.

It is found in the cytoplasm. The catalysed reaction is isopentenyl diphosphate = dimethylallyl diphosphate. Functionally, involved in the biosynthesis of isoprenoids. Catalyzes the 1,3-allylic rearrangement of the homoallylic substrate isopentenyl (IPP) to its allylic isomer, dimethylallyl diphosphate (DMAPP). This chain is Isopentenyl-diphosphate delta-isomerase, found in Lactococcus lactis subsp. lactis (strain IL1403) (Streptococcus lactis).